We begin with the raw amino-acid sequence, 111 residues long: Large ribosomal subunit protein uL23 (111 aa).

The protein belongs to the universal ribosomal protein uL23 family. As to quaternary structure, part of the 50S ribosomal subunit. Contacts protein L29, and trigger factor when it is bound to the ribosome.

Functionally, one of the early assembly proteins it binds 23S rRNA. One of the proteins that surrounds the polypeptide exit tunnel on the outside of the ribosome. Forms the main docking site for trigger factor binding to the ribosome. The chain is Large ribosomal subunit protein uL23 from Chlamydia trachomatis serovar L2 (strain ATCC VR-902B / DSM 19102 / 434/Bu).